Reading from the N-terminus, the 786-residue chain is Kazrin-A (786 aa).

The tract at residues 44–70 (EEPGEPQEHQQQQQQQNHQDAPVQRQK) is disordered. A compositionally biased stretch (low complexity) spans 52-62 (HQQQQQQQNHQ). Residues 92 to 270 (LLHEEVLRLQ…SLATLTKDVP (179 aa)) are a coiled coil. Positions 350–425 (MSDASVMEGE…LFDDSDSLSS (76 aa)) are disordered. 3 consecutive SAM domains span residues 457-522 (WRAG…YRDA), 535-599 (DHHW…LHTL), and 623-686 (WTCQ…SEEM). The segment at 703-760 (PLGTPPTLHRQSSLSSSSPSCHDDQQSLRRVKQQLGLSPKNLTARNISHQSRSGSFPR) is disordered. Residues 742–758 (KNLTARNISHQSRSGSF) show a composition bias toward polar residues.

Belongs to the kazrin family.

In Danio rerio (Zebrafish), this protein is Kazrin-A (kazna).